The sequence spans 403 residues: GPI-N-acetylgalactosamine transferase PGAP4 (403 aa).

Topologically, residues 1-22 (MSTSTSPAAMLLRRLRRLSWGS) are cytoplasmic. A helical membrane pass occupies residues 23-43 (TAVQLFILTVVTFGLLAPLAC). The Lumenal segment spans residues 44–259 (HRLLHSYFYL…RLQHYTNPEP (216 aa)). Residue V109 coordinates UDP-N-acetyl-alpha-D-galactosamine. 2 disulfides stabilise this stretch: C132/C136 and C144/C194. A DXD motif motif is present at residues 211 to 213 (EDD). Residues 260-280 (MRILEWVGVGMLLGPLLTWIY) traverse the membrane as a helical segment. Over 281–287 (MRFASRP) the chain is Cytoplasmic. Residues 288 to 308 (GFSWPVMLFFSLYSMGLVELV) form a helical membrane-spanning segment. The Lumenal portion of the chain corresponds to 309-403 (GRHYFLELRR…LRYNFHPSLL (95 aa)). C332 and C333 are disulfide-bonded. Residues T334, P335, and K362 each coordinate UDP-N-acetyl-alpha-D-galactosamine.

Belongs to the PGAP4 family. Glycosylated.

It is found in the golgi apparatus membrane. In terms of biological role, golgi-resident glycosylphosphatidylinositol (GPI)-N-acetylgalactosamine transferase that catalyzes the N-acetyl-beta-D-galactosamine transfer from an UDP-N-acetyl-alpha-D-galactosamine to the 4-OH-position of first mannose of the glycosylphosphatidylinositol (GPI) of a GPI-anchored protein (GPI-AP). This modification occurs after the fatty acid remodeling step of the GPI-anchor maturation. The polypeptide is GPI-N-acetylgalactosamine transferase PGAP4 (Pongo abelii (Sumatran orangutan)).